The following is a 507-amino-acid chain: Arylsulfatase A (507 aa).

The N-terminal stretch at 1-18 is a signal peptide; sequence MGAPRSLLLALAAGLAVA. Ca(2+) contacts are provided by Asp-29, Asp-30, and Cys-69. Residue Cys-69 is the Nucleophile of the active site. Residue Cys-69 is modified to 3-oxoalanine (Cys). Substrate is bound at residue Lys-123. The active site involves His-125. Substrate is bound at residue Ser-150. Intrachain disulfides connect Cys-156–Cys-172 and Cys-161–Cys-168. Residue Asn-158 is glycosylated (N-linked (GlcNAc...) asparagine). N-linked (GlcNAc...) asparagine glycosylation occurs at Asn-184. Residue His-229 coordinates substrate. Positions 281 and 282 each coordinate Ca(2+). 4 disulfides stabilise this stretch: Cys-300–Cys-414, Cys-488–Cys-500, Cys-489–Cys-502, and Cys-493–Cys-499. Lys-302 contributes to the substrate binding site. A glycan (N-linked (GlcNAc...) asparagine) is linked at Asn-350.

It belongs to the sulfatase family. Homodimer at neutral pH and homooctamer at acidic pH. Exists both as a single chain of 58 kDa (component A) or as a chain of 50 kDa (component B) linked by disulfide bond(s) to a 7 kDa chain (component C). Interacts with SUMF1. The cofactor is Ca(2+). The conversion to 3-oxoalanine (also known as C-formylglycine, FGly), of a serine or cysteine residue in prokaryotes and of a cysteine residue in eukaryotes, is critical for catalytic activity. This post-translational modification is severely defective in multiple sulfatase deficiency (MSD).

The protein localises to the endoplasmic reticulum. It is found in the lysosome. The enzyme catalyses an N-acyl-1-beta-D-(3-O-sulfo)-galactosyl-sphing-4-enine + H2O = a beta-D-galactosyl-(1&lt;-&gt;1')-N-acylsphing-4-enine + sulfate + H(+). Its activity is regulated as follows. Inhibited by phosphate. The phosphate forms a covalent bond with the active site 3-oxoalanine. Its function is as follows. Hydrolyzes cerebroside sulfate. The chain is Arylsulfatase A (ARSA) from Homo sapiens (Human).